Consider the following 343-residue polypeptide: MTGVTVCCGTVNSIKALWETRIKKTKDDLKKEKEQKDRRAVGRLTGAWEDRIILAKLKEKIVTEEGRVILRIEKEEWKTLPPALVQLSQIQEWQLHRIGLQRIPRFISSFQSLIVLDLSRNSVTEIPKEIGKLTRLRELLLSYNRVSYVPEELGCCENLEKLELAMNRDLDELPTQLSNLKKLSHLDLSMNQFTTIPDCVVNLPSLEWLDMGSNILETLPDNIHRMEKLHTLWLPRNELEYLPDNISRMKSLDTLVLSKNKLRDIPPLMEGMSNLRFVNFRDNPLTYDVTLPDLNEDVEEEENDREMFGREFMNFYIQEARKRGSQNFTSVLNVMLEGVSETA.

10 LRR repeats span residues 64 to 87 (EEGRVILRIEKEEWKTLPPALVQL), 88 to 110 (SQIQEWQLHRIGLQRIPRFISSF), 111 to 133 (QSLIVLDLSRNSVTEIPKEIGKL), 134 to 156 (TRLRELLLSYNRVSYVPEELGCC), 158 to 180 (NLEKLELAMNRDLDELPTQLSNL), 181 to 203 (KKLSHLDLSMNQFTTIPDCVVNL), 204 to 226 (PSLEWLDMGSNILETLPDNIHRM), 228 to 249 (KLHTLWLPRNELEYLPDNISRM), 250 to 274 (KSLDTLVLSKNKLRDIPPLMEGMSN), and 275 to 295 (LRFVNFRDNPLTYDVTLPDLN).

The protein localises to the cytoplasm. Its subcellular location is the myofibril. It is found in the sarcomere. It localises to the m line. Component of the sarcomeric M-band which plays a role in myocyte response to biomechanical stress. May regulate expression of other M-band proteins via an SRF-dependent pathway. Important for normal contractile function in heart. This is Leucine-rich repeat-containing protein 39 from Danio rerio (Zebrafish).